A 288-amino-acid polypeptide reads, in one-letter code: 3-methyl-2-oxobutanoate hydroxymethyltransferase (288 aa).

Positions 48 and 87 each coordinate Mg(2+). Residues 48–49 (DS), D87, and K116 contribute to the 3-methyl-2-oxobutanoate site. Residue E118 coordinates Mg(2+). The active-site Proton acceptor is the E185.

This sequence belongs to the PanB family. As to quaternary structure, homodecamer; pentamer of dimers. Requires Mg(2+) as cofactor.

It localises to the cytoplasm. It catalyses the reaction 3-methyl-2-oxobutanoate + (6R)-5,10-methylene-5,6,7,8-tetrahydrofolate + H2O = 2-dehydropantoate + (6S)-5,6,7,8-tetrahydrofolate. It participates in cofactor biosynthesis; coenzyme A biosynthesis. Its function is as follows. Catalyzes the reversible reaction in which hydroxymethyl group from 5,10-methylenetetrahydrofolate is transferred onto alpha-ketoisovalerate to form ketopantoate. This chain is 3-methyl-2-oxobutanoate hydroxymethyltransferase, found in Hyperthermus butylicus (strain DSM 5456 / JCM 9403 / PLM1-5).